The following is a 258-amino-acid chain: Flagellar brake protein YcgR (258 aa).

A PilZ domain is found at 131–248 (QKREYYRVAT…ALSLIQRYIT (118 aa)).

The protein belongs to the YcgR family. In terms of assembly, monomer. Interacts with the flagellar basal bodies.

It is found in the bacterial flagellum basal body. Its function is as follows. Acts as a flagellar brake, regulating swimming and swarming in a bis-(3'-5') cyclic diguanylic acid (c-di-GMP)-dependent manner. Binds 1 c-di-GMP dimer per subunit. Increasing levels of c-di-GMP lead to decreased motility. This Nitrosospira multiformis (strain ATCC 25196 / NCIMB 11849 / C 71) protein is Flagellar brake protein YcgR.